The primary structure comprises 377 residues: UDP-N-acetylglucosamine--N-acetylmuramyl-(pentapeptide) pyrophosphoryl-undecaprenol N-acetylglucosamine transferase (377 aa).

Residues 11-13 (TGG), N123, R164, S194, and Q295 contribute to the UDP-N-acetyl-alpha-D-glucosamine site.

Belongs to the glycosyltransferase 28 family. MurG subfamily.

The protein resides in the cell inner membrane. The catalysed reaction is di-trans,octa-cis-undecaprenyl diphospho-N-acetyl-alpha-D-muramoyl-L-alanyl-D-glutamyl-meso-2,6-diaminopimeloyl-D-alanyl-D-alanine + UDP-N-acetyl-alpha-D-glucosamine = di-trans,octa-cis-undecaprenyl diphospho-[N-acetyl-alpha-D-glucosaminyl-(1-&gt;4)]-N-acetyl-alpha-D-muramoyl-L-alanyl-D-glutamyl-meso-2,6-diaminopimeloyl-D-alanyl-D-alanine + UDP + H(+). It participates in cell wall biogenesis; peptidoglycan biosynthesis. Cell wall formation. Catalyzes the transfer of a GlcNAc subunit on undecaprenyl-pyrophosphoryl-MurNAc-pentapeptide (lipid intermediate I) to form undecaprenyl-pyrophosphoryl-MurNAc-(pentapeptide)GlcNAc (lipid intermediate II). This chain is UDP-N-acetylglucosamine--N-acetylmuramyl-(pentapeptide) pyrophosphoryl-undecaprenol N-acetylglucosamine transferase, found in Opitutus terrae (strain DSM 11246 / JCM 15787 / PB90-1).